Reading from the N-terminus, the 334-residue chain is Beta-hexosaminidase (334 aa).

Substrate-binding positions include Asp60, Arg68, Arg133, and 163 to 164 (KH). Catalysis depends on His176, which acts as the Proton donor/acceptor. Asp247 acts as the Nucleophile in catalysis.

Belongs to the glycosyl hydrolase 3 family. NagZ subfamily.

It localises to the cytoplasm. The enzyme catalyses Hydrolysis of terminal non-reducing N-acetyl-D-hexosamine residues in N-acetyl-beta-D-hexosaminides.. It functions in the pathway cell wall biogenesis; peptidoglycan recycling. Plays a role in peptidoglycan recycling by cleaving the terminal beta-1,4-linked N-acetylglucosamine (GlcNAc) from peptide-linked peptidoglycan fragments, giving rise to free GlcNAc, anhydro-N-acetylmuramic acid and anhydro-N-acetylmuramic acid-linked peptides. The sequence is that of Beta-hexosaminidase from Xanthomonas axonopodis pv. citri (strain 306).